A 116-amino-acid polypeptide reads, in one-letter code: uncharacterized protein (116 aa).

The chain crosses the membrane as a helical span at residues 89-109; the sequence is VGFVILILLYILTNPNAIELI.

The protein belongs to the M.jannaschii MJ0023/MJ0349/MJ1072/MJ1074/MJ1107/MJECL16 family.

The protein resides in the membrane. This is an uncharacterized protein from Methanocaldococcus jannaschii (strain ATCC 43067 / DSM 2661 / JAL-1 / JCM 10045 / NBRC 100440) (Methanococcus jannaschii).